Consider the following 666-residue polypeptide: DEAD-box ATP-dependent RNA helicase 30 (666 aa).

Positions 53-102 (PDPNLPRRLPFPSSSSTPTAAAPPDSGEPSRARARTETYRTGDMNPYDLR) are disordered. A compositionally biased stretch (low complexity) spans 64–76 (PSSSSTPTAAAPP). Basic and acidic residues predominate over residues 80-92 (EPSRARARTETYR). Positions 251–279 (RYFQEANFPDYCMQAIAKSGFVEPTPIQS) match the Q motif motif. Positions 282-457 (WPMALKGRDM…RQFLQNPYKV (176 aa)) constitute a Helicase ATP-binding domain. 295–302 (AQTGSGKT) lines the ATP pocket. Positions 405 to 408 (DEAD) match the DEAD box motif. The region spanning 485–630 (RLSKLLSDLM…VVNPALESMA (146 aa)) is the Helicase C-terminal domain. Residues 632–666 (SASSMGGGNFRSRGRGGFGNRSGSNSIPIRGRRPY) form a disordered region. Positions 636 to 651 (MGGGNFRSRGRGGFGN) are enriched in gly residues.

Belongs to the DEAD box helicase family. DDX5/DBP2 subfamily.

The protein localises to the nucleus. The catalysed reaction is ATP + H2O = ADP + phosphate + H(+). Its function is as follows. ATP-dependent RNA helicase involved nonsense-mediated mRNA decay and ribosome biogenesis through rRNA processing. The sequence is that of DEAD-box ATP-dependent RNA helicase 30 from Oryza sativa subsp. japonica (Rice).